The chain runs to 271 residues: 5'-AMP-activated protein kinase subunit beta-2 (271 aa).

A disordered region spans residues 1 to 46 (MGNTTSERVSGERHGAKAARAEGGGHGPGKEHKIMVGSTDDPSVFS). S38 carries the phosphoserine; by ULK1 modification. At T39 the chain carries Phosphothreonine; by ULK1. S68 carries the post-translational modification Phosphoserine; by ULK1. S94 and S107 each carry phosphoserine. A Phosphothreonine modification is found at T147. 4 positions are modified to phosphoserine: S157, S169, S173, and S183.

Belongs to the 5'-AMP-activated protein kinase beta subunit family. As to quaternary structure, AMPK is a heterotrimer of an alpha catalytic subunit (PRKAA1 or PRKAA2), a beta (PRKAB1 or PRKAB2) and a gamma non-catalytic subunits (PRKAG1, PRKAG2 or PRKAG3). Phosphorylated when associated with the catalytic subunit (PRKAA1 or PRKAA2). Phosphorylated by ULK1 and ULK2; leading to negatively regulate AMPK activity and suggesting the existence of a regulatory feedback loop between ULK1, ULK2 and AMPK.

Its function is as follows. Non-catalytic subunit of AMP-activated protein kinase (AMPK), an energy sensor protein kinase that plays a key role in regulating cellular energy metabolism. In response to reduction of intracellular ATP levels, AMPK activates energy-producing pathways and inhibits energy-consuming processes: inhibits protein, carbohydrate and lipid biosynthesis, as well as cell growth and proliferation. AMPK acts via direct phosphorylation of metabolic enzymes, and by longer-term effects via phosphorylation of transcription regulators. Also acts as a regulator of cellular polarity by remodeling the actin cytoskeleton; probably by indirectly activating myosin. Beta non-catalytic subunit acts as a scaffold on which the AMPK complex assembles, via its C-terminus that bridges alpha (PRKAA1 or PRKAA2) and gamma subunits (PRKAG1, PRKAG2 or PRKAG3). The sequence is that of 5'-AMP-activated protein kinase subunit beta-2 (Prkab2) from Mus musculus (Mouse).